The following is a 164-amino-acid chain: Cyanate hydratase (164 aa).

Catalysis depends on residues R104, E107, and S130.

This sequence belongs to the cyanase family.

It catalyses the reaction cyanate + hydrogencarbonate + 3 H(+) = NH4(+) + 2 CO2. In terms of biological role, catalyzes the reaction of cyanate with bicarbonate to produce ammonia and carbon dioxide. The protein is Cyanate hydratase of Botryotinia fuckeliana (strain B05.10) (Noble rot fungus).